The following is a 584-amino-acid chain: 65 kDa protein (584 aa).

One can recognise a Toprim domain in the interval 459–548 (YDLYIAESAI…TKKVENWLPP (90 aa)).

The sequence is that of 65 kDa protein from Zymomonas mobilis subsp. mobilis (strain ATCC 10988 / DSM 424 / LMG 404 / NCIMB 8938 / NRRL B-806 / ZM1).